Consider the following 324-residue polypeptide: Beta-ketoacyl-[acyl-carrier-protein] synthase III (324 aa).

Active-site residues include Cys116 and His251. Residues 252-256 (QANLR) form an ACP-binding region. Asn281 is an active-site residue.

The protein belongs to the thiolase-like superfamily. FabH family. As to quaternary structure, homodimer.

The protein resides in the cytoplasm. It carries out the reaction malonyl-[ACP] + acetyl-CoA + H(+) = 3-oxobutanoyl-[ACP] + CO2 + CoA. It functions in the pathway lipid metabolism; fatty acid biosynthesis. In terms of biological role, catalyzes the condensation reaction of fatty acid synthesis by the addition to an acyl acceptor of two carbons from malonyl-ACP. Catalyzes the first condensation reaction which initiates fatty acid synthesis and may therefore play a role in governing the total rate of fatty acid production. Possesses both acetoacetyl-ACP synthase and acetyl transacylase activities. Its substrate specificity determines the biosynthesis of branched-chain and/or straight-chain of fatty acids. The protein is Beta-ketoacyl-[acyl-carrier-protein] synthase III of Xylella fastidiosa (strain 9a5c).